The primary structure comprises 323 residues: Protein REDOX 2 (323 aa).

Residue aspartate 53 coordinates NADP(+). The Proton donor role is filled by tyrosine 58. A substrate-binding site is contributed by histidine 121. Residues 167–168 (SN), glutamine 189, 215–220 (WSPLLS), and 289–297 (DQIHEIPQR) contribute to the NADP(+) site. The segment at 302-323 (GEEFMHPEGPIKSPEELWDGDL) is disordered.

Belongs to the aldo/keto reductase family. In terms of assembly, monomer. In terms of tissue distribution, expressed in leaf epidermis.

The catalysed reaction is 15alpha-stemmadenine + NADP(+) = 17-dehydrostemmadenine + NADPH + 2 H(+). The protein operates within alkaloid biosynthesis. Its function is as follows. Component of iboga and aspidosperma monoterpenoid indole alkaloids (MIAs, e.g. tabersonine and catharanthine) biosynthesis pathway from 19E-geissoschizine. Catalyzes the second oxidation step of the unstable intermediate product resulting from the reaction triggered by the geissoschizine oxidase (GO) in the stemmadenine biosynthesis process from 19E-geissoschizine. In Catharanthus roseus (Madagascar periwinkle), this protein is Protein REDOX 2.